The chain runs to 351 residues: MAVPAAAMGPSALGQSGPGSMAPWCSVSSGPSRYVLGMQELFRGHSKTREFLAHSAKVHSVAWSCDGRRLASGSFDKTASVFLLEKDRLVKENNYRGHGDSVDQLCWHPSNPDLFVTASGDKTIRIWDVRTTKCIATVNTKGENINICWSPDGQTIAVGNKDDVVTFIDAKTHRSKAEEQFKFEVNEISWNNDNNMFFLTNGNGCINILSYPELKPVQSINAHPSNCICIKFDPMGKYFATGSADALVSLWDVDELVCVRCFSRLDWPVRTLSFSHDGKMLASASEDHFIDIAEVETGDKLWEVQCESPTFTVAWHPKRPLLAFACDDKDGKYDSSREAGTVKLFGLPNDS.

Residues 1 to 20 (MAVPAAAMGPSALGQSGPGS) form a disordered region. Residue Ala2 is modified to N-acetylalanine. WD repeat units lie at residues 53–94 (AHSA…KENN), 97–137 (GHGD…CIAT), 139–178 (NTKGENINICWSPDGQTIAVGNKDDVVTFIDAKTHRSKAE), 180–221 (QFKF…QSIN), 222–261 (AHPSNCICIKFDPMGKYFATGSADALVSLWDVDELVCVRC), and 264–303 (RLDWPVRTLSFSHDGKMLASASEDHFIDIAEVETGDKLWE).

It belongs to the THOC3 family. Component of the THO subcomplex, which is composed of THOC1, THOC2, THOC3, THOC5, THOC6 and THOC7. The THO subcomplex interacts with DDX39B to form the THO-DDX39B complex which multimerizes into a 28-subunit tetrameric assembly. Component of the transcription/export (TREX) complex at least composed of ALYREF/THOC4, DDX39B, SARNP/CIP29, CHTOP and the THO subcomplex; in the complex interacts with THOC2. TREX seems to have a dynamic structure involving ATP-dependent remodeling.

Its subcellular location is the nucleus. It is found in the nucleus speckle. Functionally, component of the THO subcomplex of the TREX complex which is thought to couple mRNA transcription, processing and nuclear export, and which specifically associates with spliced mRNA and not with unspliced pre-mRNA. Required for efficient export of polyadenylated RNA and spliced mRNA. The THOC1-THOC2-THOC3 core complex alone is sufficient to bind export factor NXF1-NXT1 and promote ATPase activity of DDX39B. TREX is recruited to spliced mRNAs by a transcription-independent mechanism, binds to mRNA upstream of the exon-junction complex (EJC) and is recruited in a splicing- and cap-dependent manner to a region near the 5' end of the mRNA where it functions in mRNA export to the cytoplasm via the TAP/NXF1 pathway. Its function is as follows. (Microbial infection) The TREX complex is essential for the export of Kaposi's sarcoma-associated herpesvirus (KSHV) intronless mRNAs and infectious virus production. The polypeptide is THO complex subunit 3 (THOC3) (Homo sapiens (Human)).